We begin with the raw amino-acid sequence, 204 residues long: Holliday junction branch migration complex subunit RuvA (204 aa).

The domain I stretch occupies residues 1 to 63 (MIGKLSGKAD…EEHIHLYGFL (63 aa)). Residues 64 to 142 (TLEEKNFFNL…KISSSSAIKD (79 aa)) are domain II. Positions 143-153 (SLNIKNITPVT) are flexible linker. Positions 153–204 (TSNEVMKALINLGFSRFEAQNVVQGIITQNPKISIDELIKTALKNRNSKFFS) are domain III.

Belongs to the RuvA family. As to quaternary structure, homotetramer. Forms an RuvA(8)-RuvB(12)-Holliday junction (HJ) complex. HJ DNA is sandwiched between 2 RuvA tetramers; dsDNA enters through RuvA and exits via RuvB. An RuvB hexamer assembles on each DNA strand where it exits the tetramer. Each RuvB hexamer is contacted by two RuvA subunits (via domain III) on 2 adjacent RuvB subunits; this complex drives branch migration. In the full resolvosome a probable DNA-RuvA(4)-RuvB(12)-RuvC(2) complex forms which resolves the HJ.

It localises to the cytoplasm. In terms of biological role, the RuvA-RuvB-RuvC complex processes Holliday junction (HJ) DNA during genetic recombination and DNA repair, while the RuvA-RuvB complex plays an important role in the rescue of blocked DNA replication forks via replication fork reversal (RFR). RuvA specifically binds to HJ cruciform DNA, conferring on it an open structure. The RuvB hexamer acts as an ATP-dependent pump, pulling dsDNA into and through the RuvAB complex. HJ branch migration allows RuvC to scan DNA until it finds its consensus sequence, where it cleaves and resolves the cruciform DNA. In Rickettsia canadensis (strain McKiel), this protein is Holliday junction branch migration complex subunit RuvA.